The following is a 733-amino-acid chain: Putative cyclic nucleotide-gated ion channel 9 (733 aa).

Over 1-117 (MLDCGKKAVK…DKFLLLCNKL (117 aa)) the chain is Cytoplasmic. A helical membrane pass occupies residues 118-138 (FVTSCILAVSVDPLFLYLPFV). Residues 139-151 (KDNEKCIGIDRKL) are Extracellular-facing. The chain crosses the membrane as a helical span at residues 152–172 (AIIATTLRTVIDAFYLFHMAL). The Cytoplasmic portion of the chain corresponds to 173–207 (RFRTAFVAPSSRVFGRGELVIDPAQIAKRYLQQYF). A helical membrane pass occupies residues 208-228 (IIDFLSVLPLPQIVVWRFLYI). Over 229–239 (SKGASVLATKR) the chain is Extracellular. A helical transmembrane segment spans residues 240 to 260 (ALRSIILVQYIPRFIRLYPLS). Topologically, residues 261–280 (SELKRTAGVFAETAWAGAAY) are cytoplasmic. A helical membrane pass occupies residues 281 to 301 (YLLLYMLASHIVGAIWYLLAL). At 302–406 (ERYNGCWTKV…GQGLETSTYP (105 aa)) the chain is on the extracellular side. Residues 407-427 (GEVIFSIALAIAGLLLFALLI) traverse the membrane as a helical segment. The Cytoplasmic segment spans residues 428–733 (GNMQTYLQSL…EPDFSADDTS (306 aa)). A nucleoside 3',5'-cyclic phosphate-binding positions include 513–637 (LFEN…SRQV) and E584. Positions 629 to 644 (FRRLHSRQVQHTFRFY) are calmodulin-binding. In terms of domain architecture, IQ spans 649-678 (RTWAAIFIQAAWRRYVKKKKLEQLRKEEEE).

Belongs to the cyclic nucleotide-gated cation channel (TC 1.A.1.5) family. As to quaternary structure, homotetramer or heterotetramer.

It localises to the cell membrane. Functionally, putative cyclic nucleotide-gated ion channel. This chain is Putative cyclic nucleotide-gated ion channel 9 (CNGC9), found in Arabidopsis thaliana (Mouse-ear cress).